We begin with the raw amino-acid sequence, 841 residues long: DNA ligase (841 aa).

NAD(+) is bound by residues 54–58 (DAEYD), 103–104 (SL), and E143. Catalysis depends on K145, which acts as the N6-AMP-lysine intermediate. 4 residues coordinate NAD(+): R166, E203, K321, and K345. C471, C474, C489, and C495 together coordinate Zn(2+). The disordered stretch occupies residues 554-575 (KTVAESDQMPSEGSSVGASGKH). A compositionally biased stretch (polar residues) spans 561-570 (QMPSEGSSVG). The BRCT domain maps to 764-841 (GINKAVAGKT…SEAELLTLLG (78 aa)).

It belongs to the NAD-dependent DNA ligase family. LigA subfamily. The cofactor is Mg(2+). Mn(2+) serves as cofactor.

The catalysed reaction is NAD(+) + (deoxyribonucleotide)n-3'-hydroxyl + 5'-phospho-(deoxyribonucleotide)m = (deoxyribonucleotide)n+m + AMP + beta-nicotinamide D-nucleotide.. Its function is as follows. DNA ligase that catalyzes the formation of phosphodiester linkages between 5'-phosphoryl and 3'-hydroxyl groups in double-stranded DNA using NAD as a coenzyme and as the energy source for the reaction. It is essential for DNA replication and repair of damaged DNA. The chain is DNA ligase from Neisseria meningitidis serogroup C / serotype 2a (strain ATCC 700532 / DSM 15464 / FAM18).